We begin with the raw amino-acid sequence, 339 residues long: Uroporphyrinogen decarboxylase (339 aa).

Residues 23-27 (RQAGR), Asp72, Tyr147, Thr202, and His315 contribute to the substrate site.

This sequence belongs to the uroporphyrinogen decarboxylase family. As to quaternary structure, homodimer.

The protein localises to the cytoplasm. It carries out the reaction uroporphyrinogen III + 4 H(+) = coproporphyrinogen III + 4 CO2. It participates in porphyrin-containing compound metabolism; protoporphyrin-IX biosynthesis; coproporphyrinogen-III from 5-aminolevulinate: step 4/4. Functionally, catalyzes the decarboxylation of four acetate groups of uroporphyrinogen-III to yield coproporphyrinogen-III. This Citrifermentans bemidjiense (strain ATCC BAA-1014 / DSM 16622 / JCM 12645 / Bem) (Geobacter bemidjiensis) protein is Uroporphyrinogen decarboxylase.